Here is a 276-residue protein sequence, read N- to C-terminus: NAD-capped RNA hydrolase NudC (276 aa).

Arg82 is a binding site for substrate. 2 residues coordinate Zn(2+): Cys112 and Cys115. Glu125 contacts substrate. 2 residues coordinate Zn(2+): Cys130 and Cys133. Tyr138 lines the substrate pocket. The region spanning 139–262 (PRISPSMIVL…SIARYLIDVY (124 aa)) is the Nudix hydrolase domain. 3 residues coordinate a divalent metal cation: Ala172, Glu188, and Glu192. The Nudix box signature appears at 173–194 (GFAEPGESAEDCLIREVREEVQ). 206–213 (QCWPFPHS) lines the substrate pocket. Residue Glu233 coordinates a divalent metal cation. Residue Ala255 coordinates substrate.

The protein belongs to the Nudix hydrolase family. NudC subfamily. In terms of assembly, homodimer. Mg(2+) is required as a cofactor. The cofactor is Mn(2+). Requires Zn(2+) as cofactor.

The enzyme catalyses a 5'-end NAD(+)-phospho-ribonucleoside in mRNA + H2O = a 5'-end phospho-adenosine-phospho-ribonucleoside in mRNA + beta-nicotinamide D-ribonucleotide + 2 H(+). The catalysed reaction is NAD(+) + H2O = beta-nicotinamide D-ribonucleotide + AMP + 2 H(+). It catalyses the reaction NADH + H2O = reduced beta-nicotinamide D-ribonucleotide + AMP + 2 H(+). In terms of biological role, mRNA decapping enzyme that specifically removes the nicotinamide adenine dinucleotide (NAD) cap from a subset of mRNAs by hydrolyzing the diphosphate linkage to produce nicotinamide mononucleotide (NMN) and 5' monophosphate mRNA. The NAD-cap is present at the 5'-end of some mRNAs and stabilizes RNA against 5'-processing. Has preference for mRNAs with a 5'-end purine. Catalyzes the hydrolysis of a broad range of dinucleotide pyrophosphates. The polypeptide is NAD-capped RNA hydrolase NudC (Pseudomonas fluorescens (strain Pf0-1)).